The chain runs to 167 residues: Translationally-controlled tumor protein homolog (167 aa).

The region spanning 1-167 (MIIYKDIFSG…WKHGIDEEKI (167 aa)) is the TCTP domain.

Belongs to the TCTP family.

Its subcellular location is the cytoplasm. It is found in the cytoskeleton. In terms of biological role, involved in protein synthesis. Involved in microtubule stabilization. This chain is Translationally-controlled tumor protein homolog, found in Candida glabrata (strain ATCC 2001 / BCRC 20586 / JCM 3761 / NBRC 0622 / NRRL Y-65 / CBS 138) (Yeast).